A 217-amino-acid polypeptide reads, in one-letter code: Probable D-methionine transport system permease protein MetI (217 aa).

The region spanning 13 to 207 (TLETLYMGFI…LIVMLSQKLG (195 aa)) is the ABC transmembrane type-1 domain. A run of 5 helical transmembrane segments spans residues 20–40 (GFIA…LAFL), 58–78 (VIIN…LLPF), 81–101 (LVVG…VSAI), 143–163 (IPIL…YSAM), and 184–204 (NMIY…MLSQ).

Belongs to the binding-protein-dependent transport system permease family. CysTW subfamily.

Its subcellular location is the cell inner membrane. Part of the binding-protein-dependent transport system for D-methionine. Probably responsible for the translocation of the substrate across the membrane. The polypeptide is Probable D-methionine transport system permease protein MetI (metI) (Pasteurella multocida (strain Pm70)).